The primary structure comprises 95 residues: Large ribosomal subunit protein bL28 (95 aa).

Belongs to the bacterial ribosomal protein bL28 family.

This chain is Large ribosomal subunit protein bL28, found in Orientia tsutsugamushi (strain Ikeda) (Rickettsia tsutsugamushi).